Consider the following 395-residue polypeptide: Flap endonuclease 1 (395 aa).

The tract at residues Met-1–Lys-104 is N-domain. Asp-34 serves as a coordination point for Mg(2+). DNA-binding residues include Arg-47 and Arg-70. Residues Asp-86, Glu-158, Glu-160, Asp-179, and Asp-181 each contribute to the Mg(2+) site. Residues Asp-122–His-253 form an I-domain region. Glu-158 contributes to the DNA binding site. Positions 231 and 233 each coordinate DNA. Position 233 (Asp-233) interacts with Mg(2+). Residues Gln-341–Phe-349 are interaction with PCNA. The interval Arg-344–Ala-395 is disordered. The span at Lys-365 to Ala-386 shows a compositional bias: basic and acidic residues.

This sequence belongs to the XPG/RAD2 endonuclease family. FEN1 subfamily. In terms of assembly, interacts with PCNA. Three molecules of FEN1 bind to one PCNA trimer with each molecule binding to one PCNA monomer. PCNA stimulates the nuclease activity without altering cleavage specificity. Mg(2+) is required as a cofactor. Phosphorylated. Phosphorylation upon DNA damage induces relocalization to the nuclear plasma.

It localises to the nucleus. The protein resides in the nucleolus. Its subcellular location is the nucleoplasm. The protein localises to the mitochondrion. Its function is as follows. Structure-specific nuclease with 5'-flap endonuclease and 5'-3' exonuclease activities involved in DNA replication and repair. During DNA replication, cleaves the 5'-overhanging flap structure that is generated by displacement synthesis when DNA polymerase encounters the 5'-end of a downstream Okazaki fragment. It enters the flap from the 5'-end and then tracks to cleave the flap base, leaving a nick for ligation. Also involved in the long patch base excision repair (LP-BER) pathway, by cleaving within the apurinic/apyrimidinic (AP) site-terminated flap. Acts as a genome stabilization factor that prevents flaps from equilibrating into structures that lead to duplications and deletions. Also possesses 5'-3' exonuclease activity on nicked or gapped double-stranded DNA, and exhibits RNase H activity. Also involved in replication and repair of rDNA and in repairing mitochondrial DNA. This Fusarium vanettenii (strain ATCC MYA-4622 / CBS 123669 / FGSC 9596 / NRRL 45880 / 77-13-4) (Fusarium solani subsp. pisi) protein is Flap endonuclease 1.